Here is a 2067-residue protein sequence, read N- to C-terminus: Nuclear receptor coactivator 6 (2067 aa).

The segment at 1 to 932 is TBP/GTF2A-binding region; sequence MVLDDLPNFE…PPRKKKNCHQ (932 aa). Positions 1 to 1060 are CREBBP-binding region; sequence MVLDDLPNFE…LPVSQNVHPP (1060 aa). Residues 1–1314 are NCOA1-binding region; sequence MVLDDLPNFE…QAHKLDSVVV (1314 aa). Arg-95 carries the post-translational modification Asymmetric dimethylarginine. Disordered stretches follow at residues 181-253 and 293-548; these read AVMT…RQMN and TRPL…PGNS. Residues 293–304 are compositionally biased toward low complexity; it reads TRPLQQHQQQPQ. Polar residues-rich tracts occupy residues 338-347, 357-372, 383-405, 421-457, 465-506, and 526-548; these read SLGTMTTNQG, MQAQ…TVQT, GSQQ…QFTA, PLQQ…QQQM, NPLS…QGPQ, and GQAN…PGNS. Positions 777-931 are NCOA6IP-binding region; sequence VNNSPSQVMG…KPPRKKKNCH (155 aa). At Ser-888 the chain carries Phosphoserine. Positions 891–895 match the LXXLL motif 1 motif; that stretch reads LVNLL. 5 disordered regions span residues 903–1279, 1313–1358, 1424–1481, 1497–1581, and 1769–1822; these read HFGV…QGLN, VVNS…APKL, NIPQ…EENK, QLLD…IPPV, and LNPD…GKGK. Positions 907–916 are enriched in low complexity; sequence NNKQNNTNAN. Basic residues predominate over residues 917-929; sequence KPKKKKPPRKKKN. Positions 984 to 996 are enriched in low complexity; it reads QRPLPQMPPQLMQ. Over residues 999–1024 the composition is skewed to pro residues; sequence APPPQPPQQQPQPQLPQQQQPPPPSQ. The span at 1025 to 1044 shows a compositional bias: low complexity; the sequence is PQSQQQQQQQQMMMMLMMQQ. Asymmetric dimethylarginine is present on residues Arg-1050 and Arg-1061. The segment covering 1066 to 1078 has biased composition (polar residues); that stretch reads PDSQRMPVQQSGN. Asymmetric dimethylarginine is present on Arg-1099. The segment covering 1103–1123 has biased composition (polar residues); that stretch reads SVNTPMGSNSRKMVYQENPQN. Residues 1124-1137 are compositionally biased toward low complexity; sequence SSSSPLGEMSSLPE. Polar residues-rich tracts occupy residues 1152–1165, 1176–1194, and 1205–1217; these read NMPS…NQLM, LSAT…SLPS, and APTQ…TPNR. The span at 1222–1235 shows a compositional bias: pro residues; the sequence is PYYPQTPNNRPPST. Residues 1313–1324 are compositionally biased toward polar residues; sequence VVNSGKQSNPGT. Positions 1326-1349 are enriched in low complexity; the sequence is KRASPSNSRRSSPGSSRKTTPSPG. Over residues 1424–1435 the composition is skewed to polar residues; sequence NIPQDSDCQNAQ. Residues 1495–1499 carry the LXXLL motif 2 motif; that stretch reads LSQLL. Residues 1545 to 1562 show a composition bias toward low complexity; that stretch reads EPSTSLSSPHSSEPCSTL. Residues 1644 to 2067 form an EP300/CRSP3-binding region region; sequence SEGQSAAQSN…AVQSKRRKSK (424 aa). The span at 1775-1805 shows a compositional bias: polar residues; it reads SPQTNTSADQSTLPPSQPTTVVSSLLTNSPG. Low complexity predominate over residues 1806–1818; sequence SSANRRSPVSSSK. N6-acetyllysine is present on residues Lys-1822 and Lys-1825. Disordered stretches follow at residues 1840–1911 and 1957–2067; these read GSLE…LPGG and VGSH…RKSK. Over residues 1871–1883 the composition is skewed to polar residues; it reads EQCSTELDSKTPT. The span at 1892-1904 shows a compositional bias: low complexity; the sequence is MTSSPMAPSSTST. Residues 2005 to 2014 show a composition bias toward basic and acidic residues; sequence EPKEIVEKSK. Ser-2022 carries the phosphoserine modification.

As to quaternary structure, monomer and homodimer. Interacts in vitro with the basal transcription factors GTF2A and TBP, suggesting an autonomous transactivation function. Interacts with NCOA1, CRSP3, RBM14, the histone acetyltransferase proteins EP300 and CREBBP, and with methyltransferase proteins NCOA6IP and PRMT2. Interacts with RBM39. Component of the MLL2/3 complex (also named ASCOM complex), at least composed of KMT2D/MLL2 or KMT2C/MLL3, ASH2L, RBBP5, WDR5, NCOA6, DPY30, KDM6A, PAXIP1/PTIP, PAGR1 and alpha- and beta-tubulin. Interacts with ZNF335; may enhance ligand-dependent transcriptional activation by nuclear hormone receptors. Phosphorylated. Widely expressed. High expression in testis and weak expression in small intestine.

The protein resides in the nucleus. In terms of biological role, nuclear receptor coactivator that directly binds nuclear receptors and stimulates the transcriptional activities in a hormone-dependent fashion. Coactivates expression in an agonist- and AF2-dependent manner. Involved in the coactivation of different nuclear receptors, such as for steroids (GR and ERs), retinoids (RARs and RXRs), thyroid hormone (TRs), vitamin D3 (VDR) and prostanoids (PPARs). Probably functions as a general coactivator, rather than just a nuclear receptor coactivator. May also be involved in the coactivation of the NF-kappa-B pathway. May coactivate expression via a remodeling of chromatin and its interaction with histone acetyltransferase proteins. Involved in placental, cardiac, hepatic and embryonic development. In Mus musculus (Mouse), this protein is Nuclear receptor coactivator 6 (Ncoa6).